The sequence spans 216 residues: Golgi to ER traffic protein 1 (216 aa).

The Lumenal portion of the chain corresponds to 1–9; that stretch reads MFDISSSNL. Residues 10 to 29 traverse the membrane as a helical segment; sequence LISVLVVLFAKQLINAVGKA. Over 30–116 the chain is Cytoplasmic; sequence TLENIGWSAY…YISKYIGYMI (87 aa). Residues 54-105 are a coiled coil; that stretch reads LDQKNVELAKVSKERKSISAQDQYARWTKLNRQFDKLTGEINKLKEETSASR. A helical transmembrane segment spans residues 117–137; that stretch reads LVTTTLPIWFFRVWFRKAVLF. The Lumenal portion of the chain corresponds to 138 to 161; sequence YFPTGVLPHYLEWFLALPFITTGG. The chain crosses the membrane as a helical span at residues 162–178; that stretch reads VGLTIWMSAVNNVVSSV. The Cytoplasmic segment spans residues 179–216; it reads IFLVKFPFEKEVPFPSKEVGNEKTSINKEEVSGTPAAN. A disordered region spans residues 193–216; sequence PSKEVGNEKTSINKEEVSGTPAAN. Positions 197-209 are enriched in basic and acidic residues; it reads VGNEKTSINKEEV.

Belongs to the WRB/GET1 family. In terms of assembly, component of the Golgi to ER traffic (GET) complex, which is composed of GET1, GET2 and GET3. Within the complex, GET1 and GET2 form a heterotetramer which is stabilized by phosphatidylinositol binding and which binds to the GET3 homodimer.

It is found in the endoplasmic reticulum membrane. It localises to the golgi apparatus membrane. In terms of biological role, required for the post-translational delivery of tail-anchored (TA) proteins to the endoplasmic reticulum. Together with GET2, acts as a membrane receptor for soluble GET3, which recognizes and selectively binds the transmembrane domain of TA proteins in the cytosol. The GET complex cooperates with the HDEL receptor ERD2 to mediate the ATP-dependent retrieval of resident ER proteins that contain a C-terminal H-D-E-L retention signal from the Golgi to the ER. This is Golgi to ER traffic protein 1 from Debaryomyces hansenii (strain ATCC 36239 / CBS 767 / BCRC 21394 / JCM 1990 / NBRC 0083 / IGC 2968) (Yeast).